The chain runs to 643 residues: Threonine--tRNA ligase (643 aa).

A TGS domain is found at 1–61 (MPIITLPDGS…EQDATLEIIT (61 aa)). Residues 243–534 (DHRKIGKALD…ITEEYAGFFP (292 aa)) are catalytic. Residues cysteine 334, histidine 385, and histidine 511 each contribute to the Zn(2+) site.

It belongs to the class-II aminoacyl-tRNA synthetase family. As to quaternary structure, homodimer. The cofactor is Zn(2+).

Its subcellular location is the cytoplasm. It carries out the reaction tRNA(Thr) + L-threonine + ATP = L-threonyl-tRNA(Thr) + AMP + diphosphate + H(+). In terms of biological role, catalyzes the attachment of threonine to tRNA(Thr) in a two-step reaction: L-threonine is first activated by ATP to form Thr-AMP and then transferred to the acceptor end of tRNA(Thr). Also edits incorrectly charged L-seryl-tRNA(Thr). This is Threonine--tRNA ligase from Haemophilus influenzae (strain PittEE).